Consider the following 339-residue polypeptide: Ribonucleoside-diphosphate reductase subunit beta (339 aa).

Aspartate 87 and histidine 121 together coordinate Fe cation. The active site involves tyrosine 125. Histidine 215 contacts Fe cation.

This sequence belongs to the ribonucleoside diphosphate reductase small chain family. As to quaternary structure, tetramer of two alpha and two beta subunits. Fe cation is required as a cofactor.

It carries out the reaction a 2'-deoxyribonucleoside 5'-diphosphate + [thioredoxin]-disulfide + H2O = a ribonucleoside 5'-diphosphate + [thioredoxin]-dithiol. Provides the precursors necessary for DNA synthesis. Catalyzes the biosynthesis of deoxyribonucleotides from the corresponding ribonucleotides. This Mycoplasma pneumoniae (strain ATCC 29342 / M129 / Subtype 1) (Mycoplasmoides pneumoniae) protein is Ribonucleoside-diphosphate reductase subunit beta (nrdF).